Consider the following 552-residue polypeptide: Arginine--tRNA ligase (552 aa).

A 'HIGH' region motif is present at residues Ala-123–Arg-133.

The protein belongs to the class-I aminoacyl-tRNA synthetase family. Monomer.

The protein localises to the cytoplasm. The enzyme catalyses tRNA(Arg) + L-arginine + ATP = L-arginyl-tRNA(Arg) + AMP + diphosphate. This chain is Arginine--tRNA ligase, found in Pelodictyon phaeoclathratiforme (strain DSM 5477 / BU-1).